The sequence spans 192 residues: Xanthine phosphoribosyltransferase (192 aa).

2 residues coordinate xanthine: Leu20 and Asn27. 128-132 (ANGQA) is a 5-phospho-alpha-D-ribose 1-diphosphate binding site. Lys156 serves as a coordination point for xanthine.

It belongs to the purine/pyrimidine phosphoribosyltransferase family. Xpt subfamily. As to quaternary structure, homodimer.

Its subcellular location is the cytoplasm. The catalysed reaction is XMP + diphosphate = xanthine + 5-phospho-alpha-D-ribose 1-diphosphate. It participates in purine metabolism; XMP biosynthesis via salvage pathway; XMP from xanthine: step 1/1. Its function is as follows. Converts the preformed base xanthine, a product of nucleic acid breakdown, to xanthosine 5'-monophosphate (XMP), so it can be reused for RNA or DNA synthesis. The protein is Xanthine phosphoribosyltransferase of Ligilactobacillus salivarius (strain UCC118) (Lactobacillus salivarius).